Consider the following 353-residue polypeptide: UDP-N-acetylglucosamine--N-acetylmuramyl-(pentapeptide) pyrophosphoryl-undecaprenol N-acetylglucosamine transferase (353 aa).

Residues 14–16, Asn126, Arg162, Ser190, Ile243, 262–267, and Gln287 each bind UDP-N-acetyl-alpha-D-glucosamine; these read TGG and ALTVSE.

The protein belongs to the glycosyltransferase 28 family. MurG subfamily.

It is found in the cell inner membrane. It carries out the reaction di-trans,octa-cis-undecaprenyl diphospho-N-acetyl-alpha-D-muramoyl-L-alanyl-D-glutamyl-meso-2,6-diaminopimeloyl-D-alanyl-D-alanine + UDP-N-acetyl-alpha-D-glucosamine = di-trans,octa-cis-undecaprenyl diphospho-[N-acetyl-alpha-D-glucosaminyl-(1-&gt;4)]-N-acetyl-alpha-D-muramoyl-L-alanyl-D-glutamyl-meso-2,6-diaminopimeloyl-D-alanyl-D-alanine + UDP + H(+). The protein operates within cell wall biogenesis; peptidoglycan biosynthesis. In terms of biological role, cell wall formation. Catalyzes the transfer of a GlcNAc subunit on undecaprenyl-pyrophosphoryl-MurNAc-pentapeptide (lipid intermediate I) to form undecaprenyl-pyrophosphoryl-MurNAc-(pentapeptide)GlcNAc (lipid intermediate II). This is UDP-N-acetylglucosamine--N-acetylmuramyl-(pentapeptide) pyrophosphoryl-undecaprenol N-acetylglucosamine transferase from Vibrio atlanticus (strain LGP32) (Vibrio splendidus (strain Mel32)).